The primary structure comprises 201 residues: Large ribosomal subunit protein eL15A (201 aa).

The segment at Ser-161–Asn-182 is disordered. Positions Lys-169–Arg-179 are enriched in basic residues.

It belongs to the eukaryotic ribosomal protein eL15 family. Component of the large ribosomal subunit (LSU). Mature yeast ribosomes consist of a small (40S) and a large (60S) subunit. The 40S small subunit contains 1 molecule of ribosomal RNA (18S rRNA) and at least 33 different proteins. The large 60S subunit contains 3 rRNA molecules (25S, 5.8S and 5S rRNA) and at least 46 different proteins.

The protein localises to the cytoplasm. Its subcellular location is the nucleus. It localises to the nucleolus. Functionally, component of the ribosome, a large ribonucleoprotein complex responsible for the synthesis of proteins in the cell. The small ribosomal subunit (SSU) binds messenger RNAs (mRNAs) and translates the encoded message by selecting cognate aminoacyl-transfer RNA (tRNA) molecules. The large subunit (LSU) contains the ribosomal catalytic site termed the peptidyl transferase center (PTC), which catalyzes the formation of peptide bonds, thereby polymerizing the amino acids delivered by tRNAs into a polypeptide chain. The nascent polypeptides leave the ribosome through a tunnel in the LSU and interact with protein factors that function in enzymatic processing, targeting, and the membrane insertion of nascent chains at the exit of the ribosomal tunnel. This chain is Large ribosomal subunit protein eL15A (rpl15), found in Schizosaccharomyces pombe (strain 972 / ATCC 24843) (Fission yeast).